The sequence spans 38 residues: ADCVGDGQRCADWAGPYCCSGYYCSCRSMPYCRCRSDS.

4 cysteine pairs are disulfide-bonded: Cys-3–Cys-19, Cys-10–Cys-24, Cys-18–Cys-34, and Cys-26–Cys-32. At Ser-38 the chain carries Serine amide.

Belongs to the neurotoxin 07 (Beta/delta-agtx) family. 02 (aga-3) subfamily. Expressed by the venom gland.

It localises to the secreted. Functionally, insecticidal neurotoxin that induces irreversible neuromuscular blockade in house crickets (A.domesticus). Modifies presynaptic voltage-gated sodium channels (Nav), causing them to open at the normal resting potential of the nerve. This leads to spontaneous release of neurotransmitter and repetitive action potentials in motor neurons. This Hololena curta (Funnel-web spider) protein is Mu-agatoxin-Hc1b.